The chain runs to 214 residues: Adenylate kinase (214 aa).

Residue 10 to 15 (GAGKGT) participates in ATP binding. Residues 30-59 (STGDLLREEIANNTELGKQAKKLIDGGNLV) are NMP. AMP is bound by residues Thr31, Arg36, 57–59 (NLV), 83–86 (GFPR), and Gln90. Residues 124–161 (LRRQCKNCGNIFNLRFIKNFDGKCPKCGSTDIYQRADD) are LID. ATP is bound at residue Arg125. Positions 128 and 131 each coordinate Zn(2+). 134–135 (IF) is an ATP binding site. 2 residues coordinate Zn(2+): Cys147 and Cys150. AMP contacts are provided by Arg158 and Arg169. Position 197 (Lys197) interacts with ATP.

Belongs to the adenylate kinase family. Monomer.

The protein resides in the cytoplasm. The catalysed reaction is AMP + ATP = 2 ADP. It functions in the pathway purine metabolism; AMP biosynthesis via salvage pathway; AMP from ADP: step 1/1. In terms of biological role, catalyzes the reversible transfer of the terminal phosphate group between ATP and AMP. Plays an important role in cellular energy homeostasis and in adenine nucleotide metabolism. This Elusimicrobium minutum (strain Pei191) protein is Adenylate kinase.